The following is an 865-amino-acid chain: NBPF family member NBPF11 (865 aa).

The stretch at 70-130 (MLRNERQFKE…RSLNEHLQAL (61 aa)) forms a coiled coil. The disordered stretch occupies residues 161-200 (KLSPENDEDEDEDVQVEEDEKVLESSAPREVQKAEESKVP). Positions 165–181 (ENDEDEDEDVQVEEDEK) are enriched in acidic residues. The Olduvai 1 domain occupies 165–259 (ENDEDEDEDV…GCQDALNILP (95 aa)). The segment covering 190–200 (EVQKAEESKVP) has biased composition (basic and acidic residues). A coiled-coil region spans residues 339-401 (KSMLRNERQF…RSLNEHLQAL (63 aa)). Olduvai domains are found at residues 436–528 (ENDN…HIIP), 529–617 (ENES…ATGP), 620–675 (SREL…VDMD), 676–767 (EIEK…PPCP), and 770–865 (SREL…SAAC). Disordered regions lie at residues 450–475 (AEKVQKSSSPREMQKAEEKEVPEDSL) and 520–567 (WEDA…GYST). Acidic residues-rich tracts occupy residues 530 to 539 (NESDDEEEEE) and 550 to 562 (ESEEEEVPQESWD). The segment at 829 to 865 (RGRGRKEGEEDQRRKEEGEEKKGKKIKTHHAPGSAAC) is disordered. Over residues 833-850 (RKEGEEDQRRKEEGEEKK) the composition is skewed to basic and acidic residues.

It belongs to the NBPF family. As to expression, expressed in spinal cord.

It is found in the cytoplasm. The sequence is that of NBPF family member NBPF11 from Homo sapiens (Human).